We begin with the raw amino-acid sequence, 243 residues long: Terpene cyclase dpmpB (243 aa).

Transmembrane regions (helical) follow at residues 13–33, 51–71, 78–98, 112–132, 141–161, 169–189, and 207–227; these read FLEV…GWTA, ALMP…ILPF, WVHV…IKFA, LTWI…ALAA, AWSA…QLLC, SYLL…QDIL, and LWFV…LWYV.

It belongs to the paxB family.

Its subcellular location is the membrane. It functions in the pathway secondary metabolite biosynthesis; terpenoid biosynthesis. Functionally, terpene cyclase; part of the gene cluster that mediates the biosynthesis of diterpenoid pyrones. The first step of the pathway is the synthesis of the alpha-pyrone moiety by the polyketide synthase dpmpA via condensation of one acetyl-CoA starter unit with 3 malonyl-CoA units and 2 methylations. The alpha-pyrone is then combined with geranylgeranyl pyrophosphate (GGPP) formed by the GGPP synthase dpmpD through the action of the prenyltransferase dpmpC to yield a linear alpha-pyrone diterpenoid. Subsequent steps in the diterpenoid pyrone biosynthetic pathway involve the decalin core formation, which is initiated by the epoxidation of the C10-C11 olefin by the FAD-dependent oxidoreductase dpmpE, and is followed by a cyclization cascade catalyzed by the terpene cyclase dpmpB. The short chain dehydrogenase/reductase dpmpG then oxidizes the 8S hydroxy group to a ketone and the short chain dehydrogenase/reductase dpmpH reduces the ketone to the 8R hydroxy group to yield higginsianin B. Higginsianin B is further methylated by the methyltransferase dpmpI to produce the intermediate named FDDP B. The cytochrome P450 monooxygenase dpmpJ then oxidizes the C-26 methyl to primary alcohol, producing the final diterpenoid pyrone with a C-26 primary alcohol on the gamma-pyrone moiety named FDDP C. The chain is Terpene cyclase dpmpB from Macrophomina phaseolina (strain MS6) (Charcoal rot fungus).